We begin with the raw amino-acid sequence, 478 residues long: Septin-4 (478 aa).

A disordered region spans residues 1-115; the sequence is MDRSLGWQGN…RSPWGKLDPY (115 aa). A compositionally biased stretch (basic and acidic residues) spans 13-26; the sequence is PEDRTEAGIKRFLE. Residues 95–108 are compositionally biased toward low complexity; sequence APAPLSPSARPRSP. A phosphoserine mark is found at Ser-117 and Ser-118. The 274-residue stretch at 141–414 folds into the Septin-type G domain; the sequence is KGFDFTLMVA…ENYRAQCIQS (274 aa). The segment at 151–158 is G1 motif; that stretch reads GESGLGKS. GTP-binding positions include 151–158 and Thr-185; that span reads GESGLGKS. The G3 motif stretch occupies residues 208–211; sequence DTPG. A G4 motif region spans residues 289 to 292; it reads AKAD. A GTP-binding site is contributed by 290 to 298; the sequence is KADTLTPPE. Phosphoserine is present on Ser-325. GTP contacts are provided by Gly-348 and Arg-363. The interval 428 to 448 is disordered; sequence LTRESGTDFPIPAVPPGTDPE. Position 432 is a phosphoserine (Ser-432). Position 434 is a phosphothreonine (Thr-434). The stretch at 447 to 478 forms a coiled coil; sequence PETEKLIREKDEELRRMQEMLHKIQKQMKENY.

Belongs to the TRAFAC class TrmE-Era-EngA-EngB-Septin-like GTPase superfamily. Septin GTPase family. As to quaternary structure, septins polymerize into heterooligomeric protein complexes that form filaments, and can associate with cellular membranes, actin filaments and microtubules. GTPase activity is required for filament formation. Interacts with SEPTIN8. In a mesenchymal cell line, interacts with SEPTIN9 isoform 2 variants HNA Trp-106 and Phe-111, but not the wild type SEPTIN9. Component of a septin core octameric complex consisting of SEPTIN12, SEPTIN7, SEPTIN6 and SEPTIN2 or SEPTIN4 in the order 12-7-6-2-2-6-7-12 or 12-7-6-4-4-6-7-12. Interacts with SEPTIN14 (via C-terminus). Interacts with DYRK1A. Interacts with SLC6A3/DAT and SNCA/alpha-synuclein. Interacts with STX1A; in the striatum. Interacts with XIAP (via BIR3 domain) following the induction of apoptosis. Interacts with AREL1 (via HECT domain); in the cytoplasm following induction of apoptosis. In terms of assembly, part of a complex composed of SEPTIN4 isoform ARTS, XIAP and BCL2, within the complex interacts with both BCL2 (via BH3 domain) and XIAP, ARTS acts as a scaffold protein and stabilizes the complex. Interacts with XIAP (via BIR3 domain) following the induction of apoptosis. In terms of processing, phosphorylated by DYRK1A. Ubiquitinated by AREL1. In terms of tissue distribution, widely expressed in adult and fetal tissues with highest expression in adult brain (at protein level), heart, liver and adrenal gland and fetal heart, kidney, liver and lung. Expressed in presynaptic terminals of dopaminergic neurons projecting from the substantia nigra pars compacta to the striatum (at protein level). Expressed in axonal varicosities in dopaminergic nerve terminals (at protein level). Expressed in the putamen and in the adjacent cerebral cortex (at protein level). Expressed in colonic crypts (at protein level). Also expressed in colorectal cancers and malignant melanomas. Expressed in platelets. As to expression, highly expressed in the brain and heart.

Its subcellular location is the cytoplasm. The protein localises to the cell projection. The protein resides in the cilium. It localises to the flagellum. It is found in the cytoplasmic vesicle. Its subcellular location is the secretory vesicle. The protein localises to the axon. The protein resides in the dendrite. It localises to the perikaryon. It is found in the synapse. Its subcellular location is the mitochondrion. The protein localises to the nucleus. Functionally, filament-forming cytoskeletal GTPase. Pro-apoptotic protein involved in LGR5-positive intestinal stem cell and Paneth cell expansion in the intestines, via its interaction with XIAP. May also play a role in the regulation of cell fate in the intestine. Positive regulator of apoptosis involved in hematopoietic stem cell homeostasis; via its interaction with XIAP. Negative regulator of repair and hair follicle regeneration in response to injury, due to inhibition of hair follicle stem cell proliferation, potentially via its interaction with XIAP. Plays an important role in male fertility and sperm motility. During spermiogenesis, essential for the establishment of the annulus (a fibrous ring structure connecting the midpiece and the principal piece of the sperm flagellum) which is a requisite for the structural and mechanical integrity of the sperm. Involved in the migration of cortical neurons and the formation of neuron leading processes during embryonic development. Required for dopaminergic metabolism in presynaptic autoreceptors; potentially via activity as a presynaptic scaffold protein. Required for the induction of cell death mediated by TGF-beta and possibly by other apoptotic stimuli. Induces apoptosis through binding and inhibition of XIAP resulting in significant reduction in XIAP levels, leading to caspase activation and cell death. Mediates the interaction between BCL2 and XIAP, thereby positively regulating the ubiquitination and degradation of BCL2 and promoting apoptosis. This chain is Septin-4, found in Homo sapiens (Human).